A 342-amino-acid chain; its full sequence is Ribosomal RNA small subunit methyltransferase H (342 aa).

S-adenosyl-L-methionine is bound by residues 42–44 (GGH), D61, F88, D119, and Q126.

Belongs to the methyltransferase superfamily. RsmH family.

It localises to the cytoplasm. It carries out the reaction cytidine(1402) in 16S rRNA + S-adenosyl-L-methionine = N(4)-methylcytidine(1402) in 16S rRNA + S-adenosyl-L-homocysteine + H(+). Functionally, specifically methylates the N4 position of cytidine in position 1402 (C1402) of 16S rRNA. The chain is Ribosomal RNA small subunit methyltransferase H from Corynebacterium jeikeium (strain K411).